The sequence spans 111 residues: Probable 4-amino-4-deoxy-L-arabinose-phosphoundecaprenol flippase subunit ArnE (111 aa).

3 helical membrane passes run 39 to 59 (WLAISLLLLGGAMLVWLWVLQ), 61 to 81 (VPVGIAYPMFSLNFVLVTLAA), and 89 to 109 (VSLRHGCGLLLIVAGVMCMGV). One can recognise an EamA domain in the interval 40–109 (LAISLLLLGG…IVAGVMCMGV (70 aa)).

Belongs to the ArnE family. As to quaternary structure, heterodimer of ArnE and ArnF.

It localises to the cell inner membrane. It participates in bacterial outer membrane biogenesis; lipopolysaccharide biosynthesis. Translocates 4-amino-4-deoxy-L-arabinose-phosphoundecaprenol (alpha-L-Ara4N-phosphoundecaprenol) from the cytoplasmic to the periplasmic side of the inner membrane. The polypeptide is Probable 4-amino-4-deoxy-L-arabinose-phosphoundecaprenol flippase subunit ArnE (Sodalis glossinidius (strain morsitans)).